A 557-amino-acid polypeptide reads, in one-letter code: Dihydroxy-acid dehydratase (557 aa).

Position 49 (Cys-49) interacts with [2Fe-2S] cluster. Asp-81 lines the Mg(2+) pocket. Position 122 (Cys-122) interacts with [2Fe-2S] cluster. Mg(2+) is bound by residues Asp-123 and Lys-124. Lys-124 bears the N6-carboxylysine mark. Cys-194 contacts [2Fe-2S] cluster. Residue Glu-446 participates in Mg(2+) binding. Ser-472 (proton acceptor) is an active-site residue.

It belongs to the IlvD/Edd family. As to quaternary structure, homodimer. It depends on [2Fe-2S] cluster as a cofactor. The cofactor is Mg(2+).

The catalysed reaction is (2R)-2,3-dihydroxy-3-methylbutanoate = 3-methyl-2-oxobutanoate + H2O. The enzyme catalyses (2R,3R)-2,3-dihydroxy-3-methylpentanoate = (S)-3-methyl-2-oxopentanoate + H2O. The protein operates within amino-acid biosynthesis; L-isoleucine biosynthesis; L-isoleucine from 2-oxobutanoate: step 3/4. It functions in the pathway amino-acid biosynthesis; L-valine biosynthesis; L-valine from pyruvate: step 3/4. Its function is as follows. Functions in the biosynthesis of branched-chain amino acids. Catalyzes the dehydration of (2R,3R)-2,3-dihydroxy-3-methylpentanoate (2,3-dihydroxy-3-methylvalerate) into 2-oxo-3-methylpentanoate (2-oxo-3-methylvalerate) and of (2R)-2,3-dihydroxy-3-methylbutanoate (2,3-dihydroxyisovalerate) into 2-oxo-3-methylbutanoate (2-oxoisovalerate), the penultimate precursor to L-isoleucine and L-valine, respectively. This Prochlorococcus marinus (strain MIT 9301) protein is Dihydroxy-acid dehydratase.